Reading from the N-terminus, the 243-residue chain is Probable 2-phosphosulfolactate phosphatase (243 aa).

This sequence belongs to the ComB family. Requires Mg(2+) as cofactor.

The enzyme catalyses (2R)-O-phospho-3-sulfolactate + H2O = (2R)-3-sulfolactate + phosphate. The chain is Probable 2-phosphosulfolactate phosphatase from Prochlorococcus marinus (strain MIT 9313).